The primary structure comprises 360 residues: POU domain, class 5, transcription factor 1 (360 aa).

Disordered regions lie at residues M1–P53 and Q87–V117. The 9aaTAD signature appears at H4–S12. A compositionally biased stretch (gly residues) spans G17 to E26. The residue at position 111 (S111) is a Phosphoserine; by MAPK. K123 is covalently cross-linked (Glycyl lysine isopeptide (Lys-Gly) (interchain with G-Cter in SUMO)). The POU-specific domain maps to D138–D212. DNA is bound by residues R157 and Q164. DNA-binding stretches follow at residues S180–R186 and S193–N196. The segment at residues R230–S289 is a DNA-binding region (homeobox). Residue T235 is modified to Phosphothreonine. A phosphoserine mark is found at S236, S289, S290, and S355.

It belongs to the POU transcription factor family. Class-5 subfamily. As to quaternary structure, interacts with PKM. Interacts with WWP2. Interacts with UBE2I and ZSCAN10. Interacts with PCGF1. Interacts with ESRRB; recruits ESRRB near the POU5F1-SOX2 element in the NANOG proximal promoter; the interaction is DNA independent. Interacts with ZNF322. Interacts with MAPK8 and MAPK9; the interaction allows MAPK8 and MAPK9 to phosphorylate POU5F1 on Ser-355. Interacts (when phosphorylated on Ser-355) with FBXW8. Interacts with FBXW4. Interacts with SOX2 and SOX15; binds synergistically with either SOX2 or SOX15 to DNA. Interacts with DDX56. Sumoylation enhances the protein stability, DNA binding and transactivation activity. Sumoylation is required for enhanced YES1 expression. In terms of processing, ubiquitinated; undergoes 'Lys-63'-linked polyubiquitination by WWP2 leading to proteasomal degradation. Post-translationally, ERK1/2-mediated phosphorylation at Ser-111 promotes nuclear exclusion and proteasomal degradation. Phosphorylation at Thr-235 and Ser-236 decrease DNA-binding and alters ability to activate transcription.

It is found in the cytoplasm. The protein resides in the nucleus. Its function is as follows. Transcription factor that binds to the octamer motif (5'-ATTTGCAT-3'). Forms a trimeric complex with SOX2 or SOX15 on DNA and controls the expression of a number of genes involved in embryonic development such as YES1, FGF4, UTF1 and ZFP206. Critical for early embryogenesis and for embryonic stem cell pluripotency. The protein is POU domain, class 5, transcription factor 1 (POU5F1) of Macaca mulatta (Rhesus macaque).